A 603-amino-acid polypeptide reads, in one-letter code: UPF0313 protein MJ1155 (603 aa).

Positions 285-557 (GIVPVQFSVV…KIQKAICLYR (273 aa)) constitute a Radical SAM core domain. The [4Fe-4S] cluster site is built by Cys299, Cys303, and Cys306.

It belongs to the UPF0313 family. [4Fe-4S] cluster serves as cofactor.

The polypeptide is UPF0313 protein MJ1155 (Methanocaldococcus jannaschii (strain ATCC 43067 / DSM 2661 / JAL-1 / JCM 10045 / NBRC 100440) (Methanococcus jannaschii)).